The chain runs to 78 residues: D-alanyl carrier protein (78 aa).

Residues 1–78 (MAFRENVLEI…MIITQLEALK (78 aa)) form the Carrier domain. An O-(pantetheine 4'-phosphoryl)serine modification is found at serine 36.

The protein belongs to the DltC family. Post-translationally, 4'-phosphopantetheine is transferred from CoA to a specific serine of apo-DCP.

It localises to the cytoplasm. Its pathway is cell wall biogenesis; lipoteichoic acid biosynthesis. Carrier protein involved in the D-alanylation of lipoteichoic acid (LTA). The loading of thioester-linked D-alanine onto DltC is catalyzed by D-alanine--D-alanyl carrier protein ligase DltA. The DltC-carried D-alanyl group is further transferred to cell membrane phosphatidylglycerol (PG) by forming an ester bond, probably catalyzed by DltD. D-alanylation of LTA plays an important role in modulating the properties of the cell wall in Gram-positive bacteria, influencing the net charge of the cell wall. The chain is D-alanyl carrier protein from Listeria welshimeri serovar 6b (strain ATCC 35897 / DSM 20650 / CCUG 15529 / CIP 8149 / NCTC 11857 / SLCC 5334 / V8).